The chain runs to 376 residues: N-acetyldiaminopimelate deacetylase (376 aa).

The active site involves Asp69. Glu128 serves as the catalytic Proton acceptor.

This sequence belongs to the peptidase M20A family. N-acetyldiaminopimelate deacetylase subfamily.

It carries out the reaction N-acetyl-(2S,6S)-2,6-diaminopimelate + H2O = (2S,6S)-2,6-diaminopimelate + acetate. The protein operates within amino-acid biosynthesis; L-lysine biosynthesis via DAP pathway; LL-2,6-diaminopimelate from (S)-tetrahydrodipicolinate (acetylase route): step 3/3. Its function is as follows. Catalyzes the conversion of N-acetyl-diaminopimelate to diaminopimelate and acetate. The protein is N-acetyldiaminopimelate deacetylase of Streptococcus uberis (strain ATCC BAA-854 / 0140J).